The sequence spans 1154 residues: DNA-directed RNA polymerase subunit beta' (1154 aa).

Zn(2+) contacts are provided by Cys-60, Cys-62, Cys-75, and Cys-78. Residues Asp-449, Asp-451, and Asp-453 each coordinate Mg(2+). Zn(2+)-binding residues include Cys-774, Cys-848, Cys-855, and Cys-858.

It belongs to the RNA polymerase beta' chain family. As to quaternary structure, the RNAP catalytic core consists of 2 alpha, 1 beta, 1 beta' and 1 omega subunit. When a sigma factor is associated with the core the holoenzyme is formed, which can initiate transcription. The cofactor is Mg(2+). It depends on Zn(2+) as a cofactor.

It catalyses the reaction RNA(n) + a ribonucleoside 5'-triphosphate = RNA(n+1) + diphosphate. In terms of biological role, DNA-dependent RNA polymerase catalyzes the transcription of DNA into RNA using the four ribonucleoside triphosphates as substrates. This is DNA-directed RNA polymerase subunit beta' from Desulforudis audaxviator (strain MP104C).